The primary structure comprises 421 residues: D-inositol 3-phosphate glycosyltransferase (421 aa).

His9 serves as a coordination point for 1D-myo-inositol 3-phosphate. UDP-N-acetyl-alpha-D-glucosamine contacts are provided by residues 15–16 (QP) and Gly23. 1D-myo-inositol 3-phosphate contacts are provided by residues 20–25 (DAGGMN), Lys78, Tyr110, Thr134, and Arg154. Residues Arg231, Lys236, and Arg294 each contribute to the UDP-N-acetyl-alpha-D-glucosamine site. Mg(2+) contacts are provided by Tyr303, Gln304, and Ala306. Residues Glu316 and Glu324 each contribute to the UDP-N-acetyl-alpha-D-glucosamine site. Thr330 lines the Mg(2+) pocket.

Belongs to the glycosyltransferase group 1 family. MshA subfamily. As to quaternary structure, homodimer.

The catalysed reaction is 1D-myo-inositol 3-phosphate + UDP-N-acetyl-alpha-D-glucosamine = 1D-myo-inositol 2-acetamido-2-deoxy-alpha-D-glucopyranoside 3-phosphate + UDP + H(+). Functionally, catalyzes the transfer of a N-acetyl-glucosamine moiety to 1D-myo-inositol 3-phosphate to produce 1D-myo-inositol 2-acetamido-2-deoxy-glucopyranoside 3-phosphate in the mycothiol biosynthesis pathway. The polypeptide is D-inositol 3-phosphate glycosyltransferase (Corynebacterium aurimucosum (strain ATCC 700975 / DSM 44827 / CIP 107346 / CN-1) (Corynebacterium nigricans)).